Consider the following 141-residue polypeptide: Large ribosomal subunit protein uL16 (141 aa).

This sequence belongs to the universal ribosomal protein uL16 family. Part of the 50S ribosomal subunit.

Binds 23S rRNA and is also seen to make contacts with the A and possibly P site tRNAs. The sequence is that of Large ribosomal subunit protein uL16 from Rhodospirillum centenum (strain ATCC 51521 / SW).